Consider the following 68-residue polypeptide: Large ribosomal subunit protein bL35 (68 aa).

A compositionally biased stretch (basic residues) spans 1-25 (MGTKIKTHKGTKKRFRLSAKGKAMH). A disordered region spans residues 1–43 (MGTKIKTHKGTKKRFRLSAKGKAMHRQSGTSHLAKGLSKKRRR).

This sequence belongs to the bacterial ribosomal protein bL35 family.

The chain is Large ribosomal subunit protein bL35 from Rhodopirellula baltica (strain DSM 10527 / NCIMB 13988 / SH1).